We begin with the raw amino-acid sequence, 427 residues long: Vitamin D3 receptor (427 aa).

Residues 21–96 (PRICGVCGDR…IGMMKEFILT (76 aa)) constitute a DNA-binding region (nuclear receptor). Zn(2+)-binding residues include Cys24, Cys27, Cys41, Cys44, Cys60, Cys66, Cys76, and Cys79. NR C4-type zinc fingers lie at residues 24-44 (CGVC…CEGC) and 60-79 (CPFN…CQAC). The hinge stretch occupies residues 97–126 (DEEVQRKREMILKRKEEEALKDSLRPKLSE). Residues 127–423 (EQQRIIAILL…LTPLVLEVFG (297 aa)) enclose the NR LBD domain. Tyr143 is a calcitriol binding site. The interval 149–201 (DFGQFRPPVRGDEEEGTLPSRSSSAHAPSFSGSSSSSCSDQYTSSPDTMEPAS) is disordered. The segment covering 168–193 (SRSSSAHAPSFSGSSSSSCSDQYTSS) has biased composition (low complexity). Ser237 provides a ligand contact to calcitriol. The interval 246-264 (KMIPGFRDLTAEDQIVLLK) is interaction with coactivator LXXLL motif. Residues Arg274, Ser278, His305, and His397 each coordinate calcitriol. A 9aaTAD motif is present at residues 416–424 (PLVLEVFGN).

Belongs to the nuclear hormone receptor family. NR1 subfamily. As to quaternary structure, homodimer in the absence of bound vitamin D3. Heterodimer with RXRA after vitamin D3 binding. Interacts with MED1, NCOA1, NCOA2, NCOA3 and NCOA6 coactivators, leading to a strong increase of transcription of target genes. Interacts with the corepressor NCOR1. Interacts with SNW1. Interacts with IRX4, the interaction does not affect its transactivation activity. Interacts with CRY1. Interacts with CRY2 in a ligand-dependent manner. Ubiquitinated by UBR5, leading to its degradation: UBR5 specifically recognizes and binds ligand-bound VDR when it is not associated with coactivators (NCOAs). In presence of NCOAs, the UBR5-degron is not accessible, preventing its ubiquitination and degradation.

The protein resides in the nucleus. The protein localises to the cytoplasm. In terms of biological role, nuclear receptor for calcitriol, the active form of vitamin D3 which mediates the action of this vitamin on cells. Enters the nucleus upon vitamin D3 binding where it forms heterodimers with the retinoid X receptor/RXR. The VDR-RXR heterodimers bind to specific response elements on DNA and activate the transcription of vitamin D3-responsive target genes. Plays a central role in calcium homeostasis. Also functions as a receptor for the secondary bile acid lithocholic acid (LCA) and its metabolites. The protein is Vitamin D3 receptor (VDR) of Sus scrofa (Pig).